We begin with the raw amino-acid sequence, 151 residues long: Large ribosomal subunit protein bL9 (151 aa).

It belongs to the bacterial ribosomal protein bL9 family.

Functionally, binds to the 23S rRNA. In Chlorobium phaeobacteroides (strain DSM 266 / SMG 266 / 2430), this protein is Large ribosomal subunit protein bL9.